Consider the following 513-residue polypeptide: Quiannulatic acid synthase (513 aa).

A helical transmembrane segment spans residues 14–34 (VFTFCNIILALASLVVAQCVY). The N-linked (GlcNAc...) asparagine glycan is linked to Asn-308. Cys-477 contacts heme.

The protein belongs to the cytochrome P450 family. The cofactor is heme.

It is found in the membrane. It carries out the reaction quiannulatene + 3 reduced [NADPH--hemoprotein reductase] + 3 O2 = quiannulatate + 3 oxidized [NADPH--hemoprotein reductase] + 4 H2O + 4 H(+). The protein operates within secondary metabolite biosynthesis; terpenoid biosynthesis. Cytochrome P450 monooxygenase; part of the gene cluster that mediates the biosynthesis of the pentacyclic sesterterpene quiannulatic acid. The first step of the pathway is performed by the sesterterpene synthase (QS) that possesses both prenyl transferase and terpene cyclase activity, converting isopentenyl diphosphate and dimethylallyl diphosphate into geranylfarnesyl diphosphate (GFPP) and further converting GFPP into quiannulatene via an unprecedented cyclization mode which involves three rounds of hydride shifts and two successive C-C bond migrations to construct the 5-6-5-5-5 fused ring. The cytochrome P450 monooxygenase Qnn-P450 then oxidizes quiannulatene at C-19 in 3 successive reactions to afford quiannulatic acid. This Emericella variicolor (Aspergillus stellatus) protein is Quiannulatic acid synthase.